Here is a 149-residue protein sequence, read N- to C-terminus: Large ribosomal subunit protein bL9 (149 aa).

Belongs to the bacterial ribosomal protein bL9 family.

Binds to the 23S rRNA. The protein is Large ribosomal subunit protein bL9 of Mannheimia succiniciproducens (strain KCTC 0769BP / MBEL55E).